Reading from the N-terminus, the 276-residue chain is NH(3)-dependent NAD(+) synthetase (276 aa).

Residue glycine 43 to serine 50 participates in ATP binding. Aspartate 49 contacts Mg(2+). Arginine 146 is a deamido-NAD(+) binding site. Threonine 166 lines the ATP pocket. Glutamate 171 is a binding site for Mg(2+). Deamido-NAD(+) is bound by residues lysine 179 and aspartate 186. The ATP site is built by lysine 195 and threonine 217. Histidine 266–lysine 267 lines the deamido-NAD(+) pocket.

It belongs to the NAD synthetase family. In terms of assembly, homodimer.

The catalysed reaction is deamido-NAD(+) + NH4(+) + ATP = AMP + diphosphate + NAD(+) + H(+). The protein operates within cofactor biosynthesis; NAD(+) biosynthesis; NAD(+) from deamido-NAD(+) (ammonia route): step 1/1. Its function is as follows. Catalyzes the ATP-dependent amidation of deamido-NAD to form NAD. Uses ammonia as a nitrogen source. The polypeptide is NH(3)-dependent NAD(+) synthetase (Aliivibrio fischeri (strain ATCC 700601 / ES114) (Vibrio fischeri)).